Reading from the N-terminus, the 553-residue chain is Solute carrier family 45 member 3 (553 aa).

The next 11 helical transmembrane spans lie at 19–39, 52–72, 88–108, 120–140, 161–181, 198–218, 275–295, 323–343, 353–373, 382–402, and 522–542; these read LLVN…ITYV, FMTM…PLLG, FIWA…RAGW, LELA…QVCF, FSVY…LPAI, CLFG…LFVT, FVAE…YTDF, MGSL…LVMD, SVYL…CLSH, AALT…LASL, and AYMV…TQVV.

Belongs to the glycoside-pentoside-hexuronide (GPH) cation symporter transporter (TC 2.A.2) family. As to expression, expressed in the epididymis. Primarily expressed in the prostate, but also in other tissues.

The protein localises to the membrane. The enzyme catalyses sucrose(out) + H(+)(out) = sucrose(in) + H(+)(in). Proton-associated sucrose transporter. May be able to transport also glucose and fructose. This Mus musculus (Mouse) protein is Solute carrier family 45 member 3 (Slc45a3).